A 49-amino-acid chain; its full sequence is MRDKVILECTECKSRNYTTKKNKKLHPDRVETNKYCKFCKKHTLHKETR.

This sequence belongs to the bacterial ribosomal protein bL33 family.

The chain is Large ribosomal subunit protein bL33 from Finegoldia magna (strain ATCC 29328 / DSM 20472 / WAL 2508) (Peptostreptococcus magnus).